Here is a 447-residue protein sequence, read N- to C-terminus: MMNMKEDKKNTMDMKNMKHHDERKKLNSSQGKNEIIFPEVAESKKDNNGYKNYTLKAQEGKTEFYKNNFSNTLGYNGNLLGPTLKLKKGDKVKIKLINNLDENTTFHWHGLEINGKVDGGPSQVIKPGKEKTIKFEVNQDSATLWYHPHPSPNTAKQVYNGLSGLLYIEDSKKNNYPSNYGKNDLPIIIQDKTFVSKKLNYSKTKDEDGTQGDTVLVNGIVNPKLTAKEEKIRLRLLNGSNARDLNLKLSNNQSFEYIASDGGQLKNAKKLKEINLAPSERKEIVIDLSKMKGEKISLVDNDKTVILPISNKEKSSNKGNTPKVSKKIKLEGMNDHVTINGNKFDPNRIDFTQKLNQKEVWEIENVKDKMGGMKHPFHIHGTQFKVLSVDGEKPPKDMRGKKDVISLEPGQKAKIEVVFKNTGTYMFHCHILEHEENGMMGQIKVTN.

Residues 1–25 are compositionally biased toward basic and acidic residues; sequence MMNMKEDKKNTMDMKNMKHHDERKK. The interval 1 to 28 is disordered; it reads MMNMKEDKKNTMDMKNMKHHDERKKLNS. Cu cation is bound by residues histidine 107, histidine 109, histidine 147, histidine 149, histidine 375, histidine 378, histidine 380, histidine 428, cysteine 429, histidine 430, histidine 434, and methionine 439.

The protein belongs to the multicopper oxidase family. It depends on Cu cation as a cofactor.

The protein localises to the cytoplasm. Its function is as follows. May be involved in copper homeostasis and oxidative stress response. The chain is Multicopper oxidase mco (mco) from Staphylococcus epidermidis (strain ATCC 12228 / FDA PCI 1200).